The primary structure comprises 409 residues: Histidine--tRNA ligase (409 aa).

The protein belongs to the class-II aminoacyl-tRNA synthetase family. In terms of assembly, homodimer.

The protein localises to the cytoplasm. It catalyses the reaction tRNA(His) + L-histidine + ATP = L-histidyl-tRNA(His) + AMP + diphosphate + H(+). This Campylobacter fetus subsp. fetus (strain 82-40) protein is Histidine--tRNA ligase.